Consider the following 84-residue polypeptide: U1-theraphotoxin-Hs1a (84 aa).

The signal sequence occupies residues 1–22 (MKVTLIAILTCAAVLVLHTTAA). Residues 23 to 48 (EELEESQLMEVGMPDTELAAVDEERL) constitute a propeptide that is removed on maturation. Disulfide bonds link cysteine 51–cysteine 65, cysteine 55–cysteine 76, and cysteine 70–cysteine 81.

The protein belongs to the neurotoxin 12 (Hwtx-2) family. 02 (Hwtx-2) subfamily. Expressed by the venom gland.

Its subcellular location is the secreted. Its function is as follows. Blocks neuromuscular transmission. Acts cooperatively to potentiate the activity of huwentoxin-I. Paralyzes locusts and kills mice following intracerebroventricular injection. The protein is U1-theraphotoxin-Hs1a of Cyriopagopus schmidti (Chinese bird spider).